The following is a 2197-amino-acid chain: Protein Ycf2 (2197 aa).

Glycine 1539–serine 1546 contacts ATP.

This sequence belongs to the Ycf2 family.

It is found in the plastid. The protein localises to the chloroplast stroma. Probable ATPase of unknown function. Its presence in a non-photosynthetic plant (Epifagus virginiana) and experiments in tobacco indicate that it has an essential function which is probably not related to photosynthesis. In Ipomoea purpurea (Common morning glory), this protein is Protein Ycf2.